We begin with the raw amino-acid sequence, 946 residues long: Villin-4 (946 aa).

4 Gelsolin-like repeats span residues 28–109 (NFKP…ETEK), 152–219 (VHVK…EDGK), 274–339 (LEHE…TIMF), and 641–715 (EIHH…PQFF). 3 disordered regions span residues 744 to 789 (ATPS…GRSP), 801 to 832 (PSTR…SSKQ), and 844 to 902 (GPTK…PAPD). Polar residues predominate over residues 765–777 (QDKSQQRTRSMSH). Positions 874–883 (SENEPEDDEN) are enriched in acidic residues. The HP domain maps to 881-946 (DENSTIYPYE…NRLKSDLQLF (66 aa)).

This sequence belongs to the villin/gelsolin family.

It localises to the cytoplasm. Its subcellular location is the cytoskeleton. Functionally, ca(2+)-regulated actin-binding protein. Binds actin microfilaments (MFs). Involved in actin filament bundling, severing and capping. Caps the barbed end of actin filaments and is able to sever them in a calcium-dependent manner. This Oryza sativa subsp. japonica (Rice) protein is Villin-4.